We begin with the raw amino-acid sequence, 2339 residues long: DNA-directed RNA polymerase III subunit RPC1 (2339 aa).

Residues Cys88, Cys91, Cys98, His101, Cys128, Cys131, and Cys175 each contribute to the Zn(2+) site. 3 residues coordinate Mg(2+): Asp611, Asp613, and Asp615. Positions 955 to 967 (PTEFFFHTMSGRE) are bridging helix. 2 disordered regions span residues 1503-1557 (EKRK…NNYY) and 2038-2079 (LKSE…DSDR). Over residues 1509 to 1520 (PKEEKENFDRNN) the composition is skewed to basic and acidic residues. Residues 1521–1557 (YKMITDNNNNDNNNNNNDNNNNDNNNNNNNSNNNNYY) are compositionally biased toward low complexity. Positions 2038 to 2047 (LKSEKKKDIN) are enriched in basic and acidic residues. Residues 2049-2059 (DNNNNDDNNNN) show a composition bias toward low complexity.

The protein belongs to the RNA polymerase beta' chain family. As to quaternary structure, component of the RNA polymerase III (Pol III) complex consisting of 17 subunits.

Its subcellular location is the nucleus. It catalyses the reaction RNA(n) + a ribonucleoside 5'-triphosphate = RNA(n+1) + diphosphate. Functionally, DNA-dependent RNA polymerase catalyzes the transcription of DNA into RNA using the four ribonucleoside triphosphates as substrates. Largest and catalytic core component of RNA polymerase III which synthesizes small RNAs, such as 5S rRNA and tRNAs. Forms the polymerase active center together with the second largest subunit. A single-stranded DNA template strand of the promoter is positioned within the central active site cleft of Pol III. A bridging helix emanates from RPC1 and crosses the cleft near the catalytic site and is thought to promote translocation of Pol III by acting as a ratchet that moves the RNA-DNA hybrid through the active site by switching from straight to bent conformations at each step of nucleotide addition. This Plasmodium falciparum protein is DNA-directed RNA polymerase III subunit RPC1.